Here is an 85-residue protein sequence, read N- to C-terminus: Photosystem I reaction center subunit PsaK (85 aa).

The next 2 helical transmembrane spans lie at 13-33 (VSWT…AIAI) and 59-79 (GAML…ILGL).

Belongs to the PsaG/PsaK family.

It is found in the cellular thylakoid membrane. This Synechococcus sp. (strain WH7803) protein is Photosystem I reaction center subunit PsaK.